A 156-amino-acid chain; its full sequence is uncharacterized protein (156 aa).

This is an uncharacterized protein from Bacillus subtilis (strain 168).